Here is a 1169-residue protein sequence, read N- to C-terminus: Transcription-repair-coupling factor (1169 aa).

Positions 634-795 constitute a Helicase ATP-binding domain; that stretch reads DMERARPMDR…MLGVRDLSVI (162 aa). 647–654 is a binding site for ATP; sequence GDVGYGKT. The short motif at 748–751 is the DEEQ box element; that stretch reads DEEQ. A Helicase C-terminal domain is found at 809–970; it reads VLEQNTNFIK…GFKIAMRDLN (162 aa).

It in the N-terminal section; belongs to the UvrB family. The protein in the C-terminal section; belongs to the helicase family. RecG subfamily.

It localises to the cytoplasm. Functionally, couples transcription and DNA repair by recognizing RNA polymerase (RNAP) stalled at DNA lesions. Mediates ATP-dependent release of RNAP and its truncated transcript from the DNA, and recruitment of nucleotide excision repair machinery to the damaged site. The protein is Transcription-repair-coupling factor of Staphylococcus epidermidis (strain ATCC 12228 / FDA PCI 1200).